The primary structure comprises 350 residues: GTPase Obg (350 aa).

The region spanning 1–159 (MKLVDEAEIE…RTLKLELKLL (159 aa)) is the Obg domain. Positions 126 to 147 (GNMHFKSSTNRSPRQALPGEPG) are disordered. The OBG-type G domain maps to 160–337 (ADVGLLGFPN…IMSRIMAFFD (178 aa)). GTP is bound by residues 166–173 (GFPNAGKS), 191–195 (FTTLY), 213–216 (DIPG), 287–290 (NKAD), and 318–320 (SAL). Serine 173 and threonine 193 together coordinate Mg(2+).

It belongs to the TRAFAC class OBG-HflX-like GTPase superfamily. OBG GTPase family. As to quaternary structure, monomer. The cofactor is Mg(2+).

It localises to the cytoplasm. Functionally, an essential GTPase which binds GTP, GDP and possibly (p)ppGpp with moderate affinity, with high nucleotide exchange rates and a fairly low GTP hydrolysis rate. Plays a role in control of the cell cycle, stress response, ribosome biogenesis and in those bacteria that undergo differentiation, in morphogenesis control. The sequence is that of GTPase Obg from Stenotrophomonas maltophilia (strain K279a).